We begin with the raw amino-acid sequence, 203 residues long: uncharacterized protein (203 aa).

3 residues coordinate Fe cation: His-34, Glu-97, and His-172.

This sequence belongs to the hemerythrin family.

It localises to the mitochondrion. This is an uncharacterized protein from Schizosaccharomyces pombe (strain 972 / ATCC 24843) (Fission yeast).